Reading from the N-terminus, the 412-residue chain is 5,5'-dehydrodivanillate O-demethylase ferredoxin reductase subunit (412 aa).

6 residues coordinate FAD: Ala-14, Lys-49, Val-82, Arg-130, Asp-279, and Val-298.

It belongs to the FAD-dependent oxidoreductase family. Monomer. The three-component monooxygenase is composed of an oxygenase (LigXa), a ferredoxin (LigXc) and a ferredoxin reductase (LigXd). The cofactor is FAD.

It catalyses the reaction 5,5'-dehydrodivanillate + NADH + O2 + H(+) = 2,2',3-trihydroxy-3'-methoxy-5,5'-dicarboxybiphenyl + formaldehyde + NAD(+) + H2O. Involved in the catabolism of 5,5'-dehydrodivanillate (DDVA), an intermediate in the biodegradation of lignin. Part of a three-component monooxygenase that catalyzes the O-demethylation of DDVA, leading to the formation of 2,2',3-trihydroxy-3'-methoxy-5,5'-dicarboxybiphenyl (OH-DDVA). LigXd probably transfers the electrons from NADH to LigXc. This Sphingobium sp. (strain NBRC 103272 / SYK-6) protein is 5,5'-dehydrodivanillate O-demethylase ferredoxin reductase subunit.